Here is a 287-residue protein sequence, read N- to C-terminus: Protein-export membrane protein SecF (287 aa).

A run of 6 helical transmembrane segments spans residues 21–41, 129–149, 158–178, 182–202, 226–246, and 259–279; these read LIAIPAAITVIALLLVVFNGL, QIYWAIGFAFLFMSVTVFIIF, VILAAASDIIIAVGGMSLFGI, LASVGAILMLIGYSVDTDILL, VTMSIAAIASMAALYLVTVFV, and VLIIGLLADILTTWLMNLGIL.

Belongs to the SecD/SecF family. SecF subfamily. Part of the protein translocation apparatus. Forms a complex with SecD.

It localises to the cell membrane. Involved in protein export. The polypeptide is Protein-export membrane protein SecF (Methanothermobacter thermautotrophicus (strain ATCC 29096 / DSM 1053 / JCM 10044 / NBRC 100330 / Delta H) (Methanobacterium thermoautotrophicum)).